The sequence spans 219 residues: Dephospho-CoA kinase (219 aa).

Residues 8 to 215 (LVGVTGGIGS…EAAASGPDCQ (208 aa)) enclose the DPCK domain. ATP is bound at residue 16–21 (GSGKST).

Belongs to the CoaE family.

The protein localises to the cytoplasm. The catalysed reaction is 3'-dephospho-CoA + ATP = ADP + CoA + H(+). Its pathway is cofactor biosynthesis; coenzyme A biosynthesis; CoA from (R)-pantothenate: step 5/5. In terms of biological role, catalyzes the phosphorylation of the 3'-hydroxyl group of dephosphocoenzyme A to form coenzyme A. The polypeptide is Dephospho-CoA kinase (Chlorobium luteolum (strain DSM 273 / BCRC 81028 / 2530) (Pelodictyon luteolum)).